A 160-amino-acid polypeptide reads, in one-letter code: Ribosome maturation factor RimP (160 aa).

It belongs to the RimP family.

It localises to the cytoplasm. In terms of biological role, required for maturation of 30S ribosomal subunits. The protein is Ribosome maturation factor RimP of Syntrophus aciditrophicus (strain SB).